A 78-amino-acid chain; its full sequence is cAMP-dependent protein kinase inhibitor beta (78 aa).

Residues 1-10 (MRTDSSKMTD) show a composition bias toward basic and acidic residues. Residues 1–78 (MRTDSSKMTD…QLEKPQNEEK (78 aa)) form a disordered region. The span at 33–42 (IQSSAATDGT) shows a compositional bias: polar residues. Basic and acidic residues predominate over residues 53–78 (SVKEDAKEKDEKTTQDQLEKPQNEEK).

Belongs to the PKI family.

Extremely potent competitive inhibitor of cAMP-dependent protein kinase activity, this protein interacts with the catalytic subunit of the enzyme after the cAMP-induced dissociation of its regulatory chains. The sequence is that of cAMP-dependent protein kinase inhibitor beta (PKIB) from Homo sapiens (Human).